The following is a 45-amino-acid chain: Large ribosomal subunit protein bL34 (45 aa).

Residues 1-45 (MTKRTFGGTSRKRKRVSGFRVRMRSHTGRRVIRTRRKRGRSRLAA) are disordered. The segment covering 10–45 (SRKRKRVSGFRVRMRSHTGRRVIRTRRKRGRSRLAA) has biased composition (basic residues).

It belongs to the bacterial ribosomal protein bL34 family.

This is Large ribosomal subunit protein bL34 from Synechococcus sp. (strain CC9311).